The sequence spans 147 residues: NAD(P)H-quinone oxidoreductase subunit N (147 aa).

It belongs to the complex I NdhN subunit family. In terms of assembly, NDH-1 can be composed of about 15 different subunits; different subcomplexes with different compositions have been identified which probably have different functions.

The protein localises to the cellular thylakoid membrane. It carries out the reaction a plastoquinone + NADH + (n+1) H(+)(in) = a plastoquinol + NAD(+) + n H(+)(out). It catalyses the reaction a plastoquinone + NADPH + (n+1) H(+)(in) = a plastoquinol + NADP(+) + n H(+)(out). Its function is as follows. NDH-1 shuttles electrons from an unknown electron donor, via FMN and iron-sulfur (Fe-S) centers, to quinones in the respiratory and/or the photosynthetic chain. The immediate electron acceptor for the enzyme in this species is believed to be plastoquinone. Couples the redox reaction to proton translocation, and thus conserves the redox energy in a proton gradient. Cyanobacterial NDH-1 also plays a role in inorganic carbon-concentration. This chain is NAD(P)H-quinone oxidoreductase subunit N, found in Synechococcus sp. (strain JA-2-3B'a(2-13)) (Cyanobacteria bacterium Yellowstone B-Prime).